The sequence spans 73 residues: Conotoxin Vc6.17 (73 aa).

The N-terminal stretch at 1-19 (MQKLIILLLVAAVLMSTQA) is a signal peptide. Residues 20-44 (LFQEKRRKEKIDLLSKRKTDAEKQH) constitute a propeptide that is removed on maturation. Cystine bridges form between Cys-48–Cys-62, Cys-55–Cys-66, and Cys-61–Cys-71.

It belongs to the conotoxin O2 superfamily. As to expression, expressed by the venom duct.

Its subcellular location is the secreted. Its function is as follows. Inhibits voltage-gated ion channels. This is Conotoxin Vc6.17 from Conus victoriae (Queen Victoria cone).